Consider the following 151-residue polypeptide: Large ribosomal subunit protein uL15 (151 aa).

The disordered stretch occupies residues 1–60 (MAENSPLKAHNLRPAPGAKTAKTRVGRGEASKGKTAGRGTKGTKARYQVPERFEGGQMPL).

The protein belongs to the universal ribosomal protein uL15 family. As to quaternary structure, part of the 50S ribosomal subunit.

In terms of biological role, binds to the 23S rRNA. This Streptomyces griseus subsp. griseus (strain JCM 4626 / CBS 651.72 / NBRC 13350 / KCC S-0626 / ISP 5235) protein is Large ribosomal subunit protein uL15.